A 137-amino-acid polypeptide reads, in one-letter code: MYCTHLMTLQLVVMAMLWVTPVRAGTECRYGCRLNNMTIIVEREDCHGSITITTCAGLCETTDLNYQSTWLPRSQGVCNFKEWSYEKVYLEGCPSGVEPFFIPVAKSCDCIKCKTDNTDCDRISMATPSCIVNPLEM.

An N-terminal signal peptide occupies residues 1 to 24 (MYCTHLMTLQLVVMAMLWVTPVRA). 5 disulfide bridges follow: cysteine 32–cysteine 78, cysteine 46–cysteine 93, cysteine 55–cysteine 108, cysteine 59–cysteine 110, and cysteine 113–cysteine 120. Asparagine 36 is a glycosylation site (N-linked (GlcNAc...) asparagine).

The protein belongs to the glycoprotein hormones subunit beta family. As to quaternary structure, heterodimer of an alpha and a beta chain.

Its subcellular location is the secreted. In terms of biological role, involved in gametogenesis and steroidogenesis. This is Gonadotropin subunit beta-1 (cgba) from Oncorhynchus keta (Chum salmon).